The chain runs to 329 residues: DNA-directed RNA polymerase subunit alpha (329 aa).

An alpha N-terminal domain (alpha-NTD) region spans residues 1–231 (MQTTLLKPKT…EQLAVFAQLE (231 aa)). The alpha C-terminal domain (alpha-CTD) stretch occupies residues 249 to 329 (FDPILLRPVD…SWPPAGLDKR (81 aa)).

The protein belongs to the RNA polymerase alpha chain family. In terms of assembly, homodimer. The RNAP catalytic core consists of 2 alpha, 1 beta, 1 beta' and 1 omega subunit. When a sigma factor is associated with the core the holoenzyme is formed, which can initiate transcription.

It catalyses the reaction RNA(n) + a ribonucleoside 5'-triphosphate = RNA(n+1) + diphosphate. Its function is as follows. DNA-dependent RNA polymerase catalyzes the transcription of DNA into RNA using the four ribonucleoside triphosphates as substrates. In Variovorax paradoxus (strain S110), this protein is DNA-directed RNA polymerase subunit alpha.